The primary structure comprises 348 residues: Nicotinate-nucleotide--dimethylbenzimidazole phosphoribosyltransferase (348 aa).

E315 acts as the Proton acceptor in catalysis.

The protein belongs to the CobT family.

It catalyses the reaction 5,6-dimethylbenzimidazole + nicotinate beta-D-ribonucleotide = alpha-ribazole 5'-phosphate + nicotinate + H(+). It participates in nucleoside biosynthesis; alpha-ribazole biosynthesis; alpha-ribazole from 5,6-dimethylbenzimidazole: step 1/2. Functionally, catalyzes the synthesis of alpha-ribazole-5'-phosphate from nicotinate mononucleotide (NAMN) and 5,6-dimethylbenzimidazole (DMB). The protein is Nicotinate-nucleotide--dimethylbenzimidazole phosphoribosyltransferase of Dechloromonas aromatica (strain RCB).